The primary structure comprises 208 residues: Uracil phosphoribosyltransferase (208 aa).

5-phospho-alpha-D-ribose 1-diphosphate contacts are provided by residues Arg-78, Arg-103, and 130 to 138 (DPMLATGGT). Residues Ile-193 and 198–200 (GDA) each bind uracil. Residue Asp-199 coordinates 5-phospho-alpha-D-ribose 1-diphosphate.

This sequence belongs to the UPRTase family. Requires Mg(2+) as cofactor.

The catalysed reaction is UMP + diphosphate = 5-phospho-alpha-D-ribose 1-diphosphate + uracil. Its pathway is pyrimidine metabolism; UMP biosynthesis via salvage pathway; UMP from uracil: step 1/1. Allosterically activated by GTP. In terms of biological role, catalyzes the conversion of uracil and 5-phospho-alpha-D-ribose 1-diphosphate (PRPP) to UMP and diphosphate. This is Uracil phosphoribosyltransferase from Nitratidesulfovibrio vulgaris (strain ATCC 29579 / DSM 644 / CCUG 34227 / NCIMB 8303 / VKM B-1760 / Hildenborough) (Desulfovibrio vulgaris).